The primary structure comprises 517 residues: MIESLIALIAAIVGLGIGYLVAKKINDAKYEIFVEQAKAKAKAIEYEAELILKDAKNSILNAELEVKKKYEEKTHKIQKDFNQKFDDLSKKEQKLQQEEEKLKEDKEYLCKSQKHIQDLQSDVDKLKNKYQEKLDDVLKILEHSTGLTQNEAKEIILKKVEENSREQIAHIVRKYEEEAKNEAKRKANFIIAQATSRFAGEFAAERLINVINIKNDELKGRIIGKEGRNVKTLEMVLGVDIIIDDTPGAIIVSCFNLYRRAIATKVIELLVEDGRIQPARIEEIHEKVCKEFDSAILEEGETIVMDLGLNKIHPEIVKLIGKLKYRASYGQNALAHSLEVAHLAGIIAAECGGDENLARRAGILHDIGKALTHDFEGSHVDLGAELCKRYKEHPVVINAIYAHHGHEEATSIESAAVCAADTLSAARPGARREVLEAFLKRVSELEDIAKSKEGIKNAYAINAGREIRVIANAQLVNDDESVLLAKEIAAEIQEKMQYPGEIKVNVIRELRAVEYAK.

Residues 1-21 form a helical membrane-spanning segment; the sequence is MIESLIALIAAIVGLGIGYLV. The region spanning 207-273 is the KH domain; that stretch reads LINVINIKND…TKVIELLVED (67 aa). The 94-residue stretch at 333–426 folds into the HD domain; that stretch reads ALAHSLEVAH…VCAADTLSAA (94 aa).

The protein belongs to the RNase Y family.

It localises to the cell membrane. Endoribonuclease that initiates mRNA decay. The chain is Ribonuclease Y from Campylobacter jejuni subsp. jejuni serotype O:6 (strain 81116 / NCTC 11828).